Here is a 697-residue protein sequence, read N- to C-terminus: MRSGWVAGRIGIDDVAPVVSCGRYPAKAVVGEVVPVRATVWREGHDAVSATLVVRYLGTEFPRLASGPGTTPPAVPLGTVVQPGKRVKPQILQMSKGRTPDVFHGEFTPDAVGLWTFRVDGWGDPIATWRHAVEAKLEAGQSETELNNDLLVGARLLMRAAEGVPRKLRDPLLEAAQQLRTPGDPYQRAGGALSPEVADLLLQYPLREFVTRGEVHGVWVDRPLARFSSWYEMFPRSTGGWDENGHPVHGTFATAAAALPRIARMGFNVVYLPPIHPIGKVHRKGRNNSVTAAPGDVGSPWAIGSDEGGHDAVHPDLGTIDDFDAFVAAARDAGLEVALDLALQCAPDHPWAKEHPEWFTVLPDGTIAYAENPPKKYQDIYPLNFDNDPDGLFHEVLRVVKFWISHGVKVFRVDNPHTKPPNFWAWLIAEVKNEDPDILFLSEAFTRPARLYGLAKLGFTQSYTYFTWRTAKWELTEFGEEIAKYADHARPNLWVNTPDILHESLQHGGPGMFAIRAVLASTMSSSWGVYSGYELFEHRSVREGSEEYLDSEKYELRPRDFDGALARGESLEPFLTRLNEIRRLHPALRQLRTIKFHHLDNDALLAYSKFDPVTGDTVLVVVTLNPFGPEESTLWLDMEALGMEPYDRFWVRDEITGEEYQWGQSNYVRIEPAKAVAHVLNMPLIPYEKRLDLLRRE.

K284 is an alpha-maltose 1-phosphate binding site. The tract at residues 286-305 is disordered; sequence RNNSVTAAPGDVGSPWAIGS. Alpha-maltose 1-phosphate-binding residues include Q344 and D379. D414 serves as the catalytic Nucleophile. Alpha-maltose 1-phosphate is bound at residue N415. E443 functions as the Proton donor in the catalytic mechanism. Residue 553-554 coordinates alpha-maltose 1-phosphate; the sequence is KY.

This sequence belongs to the glycosyl hydrolase 13 family. GlgE subfamily. In terms of assembly, homodimer.

The catalysed reaction is alpha-maltose 1-phosphate + [(1-&gt;4)-alpha-D-glucosyl](n) = [(1-&gt;4)-alpha-D-glucosyl](n+2) + phosphate. It participates in glycan biosynthesis; glycogen biosynthesis. The transfer reaction from maltose-1-P to glycogen is inhibited by micromolar amounts of inorganic phosphate or arsenate but is only slightly inhibited by millimolar concentrations of glucose-1-P, glucose-6-P, or inorganic pyrophosphate. Is also inhibited by ATP, by 1,4-dideoxy-1,4-imino-D-arabinitol (DIA), but not by isofagomine. Functionally, maltosyltransferase that uses maltose 1-phosphate (M1P) as the sugar donor to elongate linear or branched alpha-(1-&gt;4)-glucans. Is also able to catalyze the reverse reaction in vitro. Cannot use glucose 1-phosphate as substrate. Is involved in a branched alpha-glucan biosynthetic pathway from trehalose, together with TreS, Mak and GlgB. This is Alpha-1,4-glucan:maltose-1-phosphate maltosyltransferase (glgE) from Mycolicibacterium smegmatis (strain ATCC 700084 / mc(2)155) (Mycobacterium smegmatis).